The sequence spans 278 residues: Checkpoint protein Hus1-like (278 aa).

The protein belongs to the HUS1 family. As to quaternary structure, component of the 9-1-1 checkpoint clamp complex consisting of Rad9 isoform A, Rad1 and Hus1-like; the interactions with Rad1 and Rad9 are direct. This complex probably also forms with Rad9 isoform B, however 9-1-1 complex containing Rad9 isoform A localizes to the nuclear periphery. In terms of tissue distribution, expressed in ovary.

The protein localises to the cytoplasm. The protein resides in the nucleus envelope. Functionally, component of the 9-1-1 checkpoint clamp complex. Involved in both meiotic and somatic DNA damage responses. Essential for activation of the meiotic checkpoint in response to double-strand DNA breaks; required for the S-phase checkpoint but not the G2-M phase checkpoint. Involved in double strand break repair by homologous recombination during meiosis; influences the organization of chromosomal DNA in the meiotic nucleus. This Drosophila melanogaster (Fruit fly) protein is Checkpoint protein Hus1-like.